The primary structure comprises 318 residues: Very-long-chain 3-oxoacyl-CoA reductase-A (318 aa).

A helical membrane pass occupies residues 15-35 (FWYLGVLAAAWWGLRAACCLL). 54-83 (GKWAVVTGATDGIGKAYAEELARRGMSIVL) serves as a coordination point for NADP(+). 2 helical membrane passes run 187 to 207 (GVIL…LTVY) and 281 to 301 (AIMG…SMGM). Serine 194 serves as a coordination point for substrate. Tyrosine 207 acts as the Proton acceptor in catalysis.

The protein belongs to the short-chain dehydrogenases/reductases (SDR) family. 17-beta-HSD 3 subfamily.

Its subcellular location is the endoplasmic reticulum membrane. It catalyses the reaction a very-long-chain (3R)-3-hydroxyacyl-CoA + NADP(+) = a very-long-chain 3-oxoacyl-CoA + NADPH + H(+). The catalysed reaction is 17beta-estradiol + NAD(+) = estrone + NADH + H(+). The enzyme catalyses 17beta-estradiol + NADP(+) = estrone + NADPH + H(+). The protein operates within lipid metabolism; fatty acid biosynthesis. It participates in steroid biosynthesis; estrogen biosynthesis. In terms of biological role, catalyzes the second of the four reactions of the long-chain fatty acids elongation cycle. This endoplasmic reticulum-bound enzymatic process, allows the addition of two carbons to the chain of long- and very long-chain fatty acids/VLCFAs per cycle. This enzyme has a 3-ketoacyl-CoA reductase activity, reducing 3-ketoacyl-CoA to 3-hydroxyacyl-CoA, within each cycle of fatty acid elongation. Thereby, it may participate in the production of VLCFAs of different chain lengths that are involved in multiple biological processes as precursors of membrane lipids and lipid mediators. May also catalyze the transformation of estrone (E1) into estradiol (E2) and play a role in estrogen formation. The protein is Very-long-chain 3-oxoacyl-CoA reductase-A (hsd17b12-a) of Xenopus laevis (African clawed frog).